Here is a 100-residue protein sequence, read N- to C-terminus: Putative pterin-4-alpha-carbinolamine dehydratase (100 aa).

It belongs to the pterin-4-alpha-carbinolamine dehydratase family.

The enzyme catalyses (4aS,6R)-4a-hydroxy-L-erythro-5,6,7,8-tetrahydrobiopterin = (6R)-L-erythro-6,7-dihydrobiopterin + H2O. In Allorhizobium ampelinum (strain ATCC BAA-846 / DSM 112012 / S4) (Agrobacterium vitis (strain S4)), this protein is Putative pterin-4-alpha-carbinolamine dehydratase.